Reading from the N-terminus, the 183-residue chain is uncharacterized protein (183 aa).

The protein belongs to the isochorismatase family.

This is an uncharacterized protein from Bacillus subtilis (strain 168).